Consider the following 489-residue polypeptide: Betaine aldehyde dehydrogenase (489 aa).

Residues Thr26 and Asp93 each contribute to the K(+) site. NAD(+) is bound at residue 150–152 (GAW). Lys162 functions as the Charge relay system in the catalytic mechanism. 176-179 (KPSE) contacts NAD(+). Val180 serves as a coordination point for K(+). 229 to 232 (GVET) is an NAD(+) binding site. K(+) is bound at residue Leu245. Glu251 functions as the Proton acceptor in the catalytic mechanism. The NAD(+) site is built by Gly253, Cys285, and Glu386. Cys285 (nucleophile) is an active-site residue. The residue at position 285 (Cys285) is a Cysteine sulfenic acid (-SOH). Lys456 and Gly459 together coordinate K(+). Glu463 functions as the Charge relay system in the catalytic mechanism.

This sequence belongs to the aldehyde dehydrogenase family. In terms of assembly, dimer of dimers. K(+) is required as a cofactor.

It carries out the reaction betaine aldehyde + NAD(+) + H2O = glycine betaine + NADH + 2 H(+). It functions in the pathway amine and polyamine biosynthesis; betaine biosynthesis via choline pathway; betaine from betaine aldehyde: step 1/1. In terms of biological role, involved in the biosynthesis of the osmoprotectant glycine betaine. Catalyzes the irreversible oxidation of betaine aldehyde to the corresponding acid. In Burkholderia multivorans (strain ATCC 17616 / 249), this protein is Betaine aldehyde dehydrogenase.